The sequence spans 1488 residues: Chromosome partition protein MukB (1488 aa).

34–41 (GGNGAGKS) is a binding site for ATP. Coiled-coil stretches lie at residues 326-418 (LEAD…QYNQ), 444-472 (LDTFQAKEQEATEKLLSLEQKMSVAQTAH), and 509-602 (RHLA…QRAP). A flexible hinge region spans residues 666–783 (PGGAEDQRLN…SLPIFGRAAR (118 aa)). 3 coiled-coil regions span residues 835-923 (EAEI…AKLE), 977-1116 (EMLS…AKAG), and 1209-1265 (VEAI…LQSV). Residues 1049–1074 (ADSGAEERARQRRDELHAQLSNNRSR) form a disordered region. The span at 1051–1065 (SGAEERARQRRDELH) shows a compositional bias: basic and acidic residues.

Belongs to the SMC family. MukB subfamily. As to quaternary structure, homodimerization via its hinge domain. Binds to DNA via its C-terminal region. Interacts, and probably forms a ternary complex, with MukE and MukF via its C-terminal region. The complex formation is stimulated by calcium or magnesium. Interacts with tubulin-related protein FtsZ.

The protein localises to the cytoplasm. Its subcellular location is the nucleoid. Plays a central role in chromosome condensation, segregation and cell cycle progression. Functions as a homodimer, which is essential for chromosome partition. Involved in negative DNA supercoiling in vivo, and by this means organize and compact chromosomes. May achieve or facilitate chromosome segregation by condensation DNA from both sides of a centrally located replisome during cell division. This Salmonella schwarzengrund (strain CVM19633) protein is Chromosome partition protein MukB.